The sequence spans 397 residues: MERFKKASSIIETLKQQGHEAYFVGGSVRDLIIDRPIGDIDIATSALPEEVMAIFPRHVPVGLEHGTVIVVENGEPYEVTTFRTESEYEDFRRPSSVQFVRSLEEDLKRRDFTMNAIAMTEEGKMVDLFAGQEAIQKREIMTVGNAADRFQEDALRMMRGIRFVSTLGFSLETKTKQAIETYGHLLEHIAIERITVEFEKLLTGTYCVKALKELVETKLFSHLPYLQMSEEKLLKATQYKWDSFEADIEAWAFFLYCIGEEHPAVFLRQWKFSNKKIKDIVAVLLTIRKRKEKDWDTVLLYKTGIHIAEMAERVYEAMIESYDHTAVNRVQTLFQALPIKNRQEMNVTGNDLLNWASKKPGPWVAEMIQKIEEAIVQGNVVNEKECIREWLQECNLL.

ATP contacts are provided by Gly26 and Arg29. The CTP site is built by Gly26 and Arg29. Residues Asp39 and Asp41 each contribute to the Mg(2+) site. ATP contacts are provided by Arg110, Asp153, Arg156, Arg159, and Arg162. Positions 110, 153, 156, 159, and 162 each coordinate CTP.

This sequence belongs to the tRNA nucleotidyltransferase/poly(A) polymerase family. Bacterial CCA-adding enzyme type 3 subfamily. Homodimer. The cofactor is Mg(2+).

The enzyme catalyses a tRNA precursor + 2 CTP + ATP = a tRNA with a 3' CCA end + 3 diphosphate. It carries out the reaction a tRNA with a 3' CCA end + 2 CTP + ATP = a tRNA with a 3' CCACCA end + 3 diphosphate. Catalyzes the addition and repair of the essential 3'-terminal CCA sequence in tRNAs without using a nucleic acid template. Adds these three nucleotides in the order of C, C, and A to the tRNA nucleotide-73, using CTP and ATP as substrates and producing inorganic pyrophosphate. tRNA 3'-terminal CCA addition is required both for tRNA processing and repair. Also involved in tRNA surveillance by mediating tandem CCA addition to generate a CCACCA at the 3' terminus of unstable tRNAs. While stable tRNAs receive only 3'-terminal CCA, unstable tRNAs are marked with CCACCA and rapidly degraded. This is CCA-adding enzyme from Bacillus cereus (strain Q1).